Consider the following 164-residue polypeptide: MSTKTNSTKATSEKTDSLKTNRGTKSSAGYSEQNTPLGGCILADTPITFNENKPVTKVKVRNTGDRPIQVGSHFHFFEANRALEFDRAAAYGKRLNISSTTAIRFEPGDETEVPLIPFGGKQTLYGFNNLVDGWTGEGVVPNSERPDKLEAIRRAAERGFKSSK.

Polar residues-rich tracts occupy residues 1–10 and 20–32; these read MSTKTNSTKA and TNRG…GYSE. Residues 1–32 form a disordered region; it reads MSTKTNSTKATSEKTDSLKTNRGTKSSAGYSE.

It belongs to the urease beta subunit family. Heterotrimer of UreA (gamma), UreB (beta) and UreC (alpha) subunits. Three heterotrimers associate to form the active enzyme.

The protein localises to the cytoplasm. It catalyses the reaction urea + 2 H2O + H(+) = hydrogencarbonate + 2 NH4(+). It functions in the pathway nitrogen metabolism; urea degradation; CO(2) and NH(3) from urea (urease route): step 1/1. This Yersinia enterocolitica serotype O:8 / biotype 1B (strain NCTC 13174 / 8081) protein is Urease subunit beta.